The primary structure comprises 114 residues: Protein yippee-like (114 aa).

In terms of domain architecture, Yippee spans 14–111 (RTYSCVHCRA…IELAHMIKEN (98 aa)). Residues C18, C21, C74, and C77 each coordinate Zn(2+).

The protein belongs to the yippee family.

Functionally, involved in regulating synaptic transmission in presynaptic neurons. In class IV dendritic arborization neurons (nociceptors), involved in regulating activation of their second-order neurons (SONs) and maintaining synaptic contact between nociceptors and their SONs. This is Protein yippee-like from Drosophila melanogaster (Fruit fly).